The following is a 153-amino-acid chain: Peptide deformylase (153 aa).

2 residues coordinate Fe cation: Cys87 and His129. Glu130 is an active-site residue. Position 133 (His133) interacts with Fe cation.

It belongs to the polypeptide deformylase family. The cofactor is Fe(2+).

It catalyses the reaction N-terminal N-formyl-L-methionyl-[peptide] + H2O = N-terminal L-methionyl-[peptide] + formate. Its function is as follows. Removes the formyl group from the N-terminal Met of newly synthesized proteins. Requires at least a dipeptide for an efficient rate of reaction. N-terminal L-methionine is a prerequisite for activity but the enzyme has broad specificity at other positions. The chain is Peptide deformylase from Dictyoglomus thermophilum (strain ATCC 35947 / DSM 3960 / H-6-12).